We begin with the raw amino-acid sequence, 139 residues long: uncharacterized protein (139 aa).

The disordered stretch occupies residues 1-116 (MYNPWQVGAS…TRPRVVARGK (116 aa)). Low complexity-rich tracts occupy residues 50–70 (RPRPFSSSPRSASGRLRGPRP) and 84–110 (LPAYLPPAAALDSQTSAPTVSPVTRPR).

This is an uncharacterized protein from Homo sapiens (Human).